Here is a 374-residue protein sequence, read N- to C-terminus: Conserved virulence factor C (374 aa).

This sequence belongs to the CvfC family.

Its function is as follows. Required for hemolysin production. This chain is Conserved virulence factor C (cvfC), found in Staphylococcus aureus (strain USA300).